A 410-amino-acid chain; its full sequence is Structure-specific endonuclease subunit SLX1 homolog (410 aa).

The 84-residue stretch at Gln-6–Ile-89 folds into the GIY-YIG domain.

It belongs to the SLX1 family. In terms of assembly, forms a heterodimer with a member of the SLX4 family. It depends on a divalent metal cation as a cofactor.

The protein resides in the nucleus. Functionally, catalytic subunit of a heterodimeric structure-specific endonuclease that resolves DNA secondary structures generated during DNA repair and recombination. Has endonuclease activity towards branched DNA substrates, introducing single-strand cuts in duplex DNA close to junctions with ss-DNA. The sequence is that of Structure-specific endonuclease subunit SLX1 homolog from Cryptosporidium parvum (strain Iowa II).